Reading from the N-terminus, the 397-residue chain is Proteasome-activating nucleotidase (397 aa).

Positions 12-58 form a coiled coil; it reads GYEDYITFLKRRIRQLELQVRTLEADKERLERELSRLRTEMSRLRQP. Residues 182-187 and H321 each bind ATP; that span reads GCGKTL. Residues 395 to 397 are docks into pockets in the proteasome alpha-ring to cause gate opening; that stretch reads MYG.

It belongs to the AAA ATPase family. Homohexamer. The hexameric complex has a two-ring architecture resembling a top hat that caps the 20S proteasome core at one or both ends. Upon ATP-binding, the C-terminus of PAN interacts with the alpha-rings of the proteasome core by binding to the intersubunit pockets.

The protein resides in the cytoplasm. ATPase which is responsible for recognizing, binding, unfolding and translocation of substrate proteins into the archaeal 20S proteasome core particle. Is essential for opening the gate of the 20S proteasome via an interaction with its C-terminus, thereby allowing substrate entry and access to the site of proteolysis. Thus, the C-termini of the proteasomal ATPase function like a 'key in a lock' to induce gate opening and therefore regulate proteolysis. Unfolding activity requires energy from ATP hydrolysis, whereas ATP binding alone promotes ATPase-20S proteasome association which triggers gate opening, and supports translocation of unfolded substrates. This Thermococcus gammatolerans (strain DSM 15229 / JCM 11827 / EJ3) protein is Proteasome-activating nucleotidase.